The primary structure comprises 463 residues: Elongation factor 1-alpha (463 aa).

Positions 8-245 constitute a tr-type G domain; the sequence is KTHLNIVIIG…DALVPPVRPA (238 aa). Residues 17-24 form a G1 region; the sequence is GHVDSGKS. 17–24 lines the GTP pocket; it reads GHVDSGKS. Residues 73–77 are G2; it reads GITID. A G3 region spans residues 94–97; that stretch reads DAPG. Residues 94-98 and 156-159 contribute to the GTP site; these read DAPGH and NKMD. Residues 156–159 form a G4 region; it reads NKMD. The tract at residues 197–199 is G5; sequence SGW.

The protein belongs to the TRAFAC class translation factor GTPase superfamily. Classic translation factor GTPase family. EF-Tu/EF-1A subfamily. As to quaternary structure, the 42S RNP particle comprises four subunits each of which contains one molecule of 5S RNA, three molecules of tRNA, two molecules of EF1-alpha and one molecule of the 5S RNA binding protein 43.

Its subcellular location is the cytoplasm. This protein is one of two protein components of a 42S RNP particle that is very abundant in previtellogenic oocytes. A major function served by 42sp50 appears to be the storage of tRNAs for later use in oogenesis and early embryogenesis. Purified 42S particles can directly transfer aminoacyl tRNA to ribosomes. This Xenopus laevis (African clawed frog) protein is Elongation factor 1-alpha.